Here is a 468-residue protein sequence, read N- to C-terminus: Phosphoglucosamine mutase (468 aa).

Catalysis depends on Ser-112, which acts as the Phosphoserine intermediate. Residues Ser-112, Asp-254, Asp-256, and Asp-258 each coordinate Mg(2+). Ser-112 carries the phosphoserine modification.

This sequence belongs to the phosphohexose mutase family. It depends on Mg(2+) as a cofactor. Post-translationally, activated by phosphorylation.

It carries out the reaction alpha-D-glucosamine 1-phosphate = D-glucosamine 6-phosphate. Functionally, catalyzes the conversion of glucosamine-6-phosphate to glucosamine-1-phosphate. In Prochlorococcus marinus (strain MIT 9313), this protein is Phosphoglucosamine mutase.